Consider the following 390-residue polypeptide: Chaperone protein DnaJ (390 aa).

The 65-residue stretch at 6 to 70 folds into the J domain; sequence DYYEILGVPR…QKRAQYDQFG (65 aa). The segment at 146–228 adopts a CR-type zinc-finger fold; that stretch reads GSEKEIYVTR…CHGTGKVRRK (83 aa). Zn(2+) is bound by residues Cys159, Cys162, Cys176, Cys179, Cys202, Cys205, Cys216, and Cys219. CXXCXGXG motif repeat units follow at residues 159–166, 176–183, 202–209, and 216–223; these read CPTCKGKG, CDMCNGTG, CPKCHGTG, and CHECHGTG.

This sequence belongs to the DnaJ family. In terms of assembly, homodimer. It depends on Zn(2+) as a cofactor.

The protein resides in the cytoplasm. Functionally, participates actively in the response to hyperosmotic and heat shock by preventing the aggregation of stress-denatured proteins and by disaggregating proteins, also in an autonomous, DnaK-independent fashion. Unfolded proteins bind initially to DnaJ; upon interaction with the DnaJ-bound protein, DnaK hydrolyzes its bound ATP, resulting in the formation of a stable complex. GrpE releases ADP from DnaK; ATP binding to DnaK triggers the release of the substrate protein, thus completing the reaction cycle. Several rounds of ATP-dependent interactions between DnaJ, DnaK and GrpE are required for fully efficient folding. Also involved, together with DnaK and GrpE, in the DNA replication of plasmids through activation of initiation proteins. The chain is Chaperone protein DnaJ from Dictyoglomus thermophilum (strain ATCC 35947 / DSM 3960 / H-6-12).